A 340-amino-acid chain; its full sequence is MSSTAVVHGDDLMEPTLQSILSQKTLRWIFVGGKGGVGKTTTSCSLAIQLAKVRKSVLLISTDPAHNLSDAFGQKFGKEARLVDGYSNLSAMEIDPNGSIQDLLASGDSQGDDPLAGLGMGNMMQDLAFSIPGVDEAMSFAEVLKQVKSLSYEVIVFDTAPTGHTLRFLQFPTVLEKALAKLSQLSSQFGPMLNSILGARGGLPGGQNIDELLQKMESLRETISEVNTQFKNPDMTTFVCVCIAEFLSLYETERMIQELTSYGIDTHAIVVNQLLFPKEGSGCEQCNARRKMQKKYLEQIEELYEDFNVVRMPLLVEEVRGKEKLEKFSEMLVHPYVPPQ.

Position 34–41 (34–41 (KGGVGKTT)) interacts with ATP. Asp63 is a catalytic residue. 2 residues coordinate ATP: Glu245 and Asn272. Residues Cys283 and Cys286 each coordinate Zn(2+). Arg320 is a binding site for ATP.

It belongs to the arsA ATPase family. In terms of assembly, homodimer.

The protein localises to the cytoplasm. Its subcellular location is the endoplasmic reticulum. In terms of biological role, ATPase required for the post-translational delivery of tail-anchored (TA) proteins to the endoplasmic reticulum. Recognizes and selectively binds the transmembrane domain of TA proteins in the cytosol. This complex then targets to the endoplasmic reticulum by membrane-bound receptors, where the tail-anchored protein is released for insertion. This process is regulated by ATP binding and hydrolysis. ATP binding drives the homodimer towards the closed dimer state, facilitating recognition of newly synthesized TA membrane proteins. ATP hydrolysis is required for insertion. Subsequently, the homodimer reverts towards the open dimer state, lowering its affinity for the membrane-bound receptor, and returning it to the cytosol to initiate a new round of targeting. The chain is ATPase get3 (get3) from Aspergillus fumigatus (strain ATCC MYA-4609 / CBS 101355 / FGSC A1100 / Af293) (Neosartorya fumigata).